The following is a 192-amino-acid chain: A-type ATP synthase subunit E (192 aa).

The protein belongs to the V-ATPase E subunit family. Has multiple subunits with at least A(3), B(3), C, D, E, F, H, I and proteolipid K(x).

The protein localises to the cell membrane. Component of the A-type ATP synthase that produces ATP from ADP in the presence of a proton gradient across the membrane. The sequence is that of A-type ATP synthase subunit E from Sulfolobus acidocaldarius (strain ATCC 33909 / DSM 639 / JCM 8929 / NBRC 15157 / NCIMB 11770).